Reading from the N-terminus, the 25-residue chain is Cytochrome c oxidase subunit 1 (25 aa).

This sequence belongs to the heme-copper respiratory oxidase family. Cu(2+) serves as cofactor. The cofactor is heme.

Its subcellular location is the cell inner membrane. It catalyses the reaction 4 Fe(II)-[cytochrome c] + O2 + 8 H(+)(in) = 4 Fe(III)-[cytochrome c] + 2 H2O + 4 H(+)(out). It functions in the pathway energy metabolism; oxidative phosphorylation. In terms of biological role, subunit I and II form the functional core of the enzyme complex. Electrons originating in cytochrome c are transferred via heme a and Cu(A) to the binuclear center formed by heme a3 and Cu(B). This cytochrome c oxidase shows proton pump activity across the membrane in addition to the electron transfer. The protein is Cytochrome c oxidase subunit 1 (ctaD) of Paracoccus versutus (Thiobacillus versutus).